We begin with the raw amino-acid sequence, 58 residues long: PI-actitoxin-Axm2b (58 aa).

The 51-residue stretch at 5–55 folds into the BPTI/Kunitz inhibitor domain; the sequence is CLLPSDGGVCRGRFTNYYYNSRTRRCETFRYGGCGGNANNFHTLRQCQATC. Cystine bridges form between Cys5-Cys55, Cys14-Cys38, and Cys30-Cys51.

Belongs to the venom Kunitz-type family. Sea anemone type 2 potassium channel toxin subfamily.

The protein resides in the secreted. The protein localises to the nematocyst. Serine protease inhibitor. Shows activity on trypsin and also shows a weak inhibition against alpha-chymotrypsin. The chain is PI-actitoxin-Axm2b from Anthopleura aff. xanthogrammica (Sea anemone).